The sequence spans 544 residues: Chaperonin GroEL 3 (544 aa).

ATP contacts are provided by residues 30–33, K51, 87–91, G415, and D496; these read TLGP and DGTTT.

Belongs to the chaperonin (HSP60) family. Forms a cylinder of 14 subunits composed of two heptameric rings stacked back-to-back. Interacts with the co-chaperonin GroES.

Its subcellular location is the cytoplasm. It catalyses the reaction ATP + H2O + a folded polypeptide = ADP + phosphate + an unfolded polypeptide.. Together with its co-chaperonin GroES, plays an essential role in assisting protein folding. The GroEL-GroES system forms a nano-cage that allows encapsulation of the non-native substrate proteins and provides a physical environment optimized to promote and accelerate protein folding. In Rhizobium etli (strain ATCC 51251 / DSM 11541 / JCM 21823 / NBRC 15573 / CFN 42), this protein is Chaperonin GroEL 3.